We begin with the raw amino-acid sequence, 617 residues long: Translation initiation factor IF-2 (617 aa).

A compositionally biased stretch (basic residues) spans 1 to 11 (MSKHKPRHFQK). The segment at 1 to 25 (MSKHKPRHFQKNKFDNRAKTSAKQQ) is disordered. Positions 119–288 (PRPPIVTIMG…ILLVAEVEDY (170 aa)) constitute a tr-type G domain. A G1 region spans residues 128–135 (GHVDHGKT). 128–135 (GHVDHGKT) contributes to the GTP binding site. Positions 153-157 (GITQK) are G2. The G3 stretch occupies residues 175 to 178 (DTPG). Residues 175 to 179 (DTPGH) and 229 to 232 (NKMD) each bind GTP. Positions 229–232 (NKMD) are G4. Positions 265–267 (SAL) are G5.

This sequence belongs to the TRAFAC class translation factor GTPase superfamily. Classic translation factor GTPase family. IF-2 subfamily.

It is found in the cytoplasm. Its function is as follows. One of the essential components for the initiation of protein synthesis. Protects formylmethionyl-tRNA from spontaneous hydrolysis and promotes its binding to the 30S ribosomal subunits. Also involved in the hydrolysis of GTP during the formation of the 70S ribosomal complex. This Mycoplasma pneumoniae (strain ATCC 29342 / M129 / Subtype 1) (Mycoplasmoides pneumoniae) protein is Translation initiation factor IF-2 (infB).